We begin with the raw amino-acid sequence, 215 residues long: Osmoprotectant import permease protein OsmW (215 aa).

In terms of domain architecture, ABC transmembrane type-1 spans Thr18–Leu202. The next 6 membrane-spanning stretches (helical) occupy residues Leu24–Val44, Thr51–Ile73, Leu78–Ile100, Trp132–Met152, Asn153–Leu173, and Met183–His203.

The protein belongs to the binding-protein-dependent transport system permease family. As to quaternary structure, the complex is composed of two ATP-binding proteins (OsmV), two transmembrane proteins (OsmW and OsmY) and a solute-binding protein (OsmX).

It localises to the cell inner membrane. Functionally, part of the OsmU ABC transporter complex, which is involved in the uptake of osmoprotectants such as choline-O-sulfate and glycine betaine. Probably responsible for the translocation of the substrate across the membrane. The protein is Osmoprotectant import permease protein OsmW (osmW) of Salmonella typhimurium (strain LT2 / SGSC1412 / ATCC 700720).